The primary structure comprises 369 residues: Guanine nucleotide-binding protein subunit beta-2 (369 aa).

Positions 1-24 are enriched in polar residues; sequence MSTIAGESSSSSKMPENSQPTTTE. Positions 1–28 are disordered; sequence MSTIAGESSSSSKMPENSQPTTTEKGSE. WD repeat units lie at residues 79 to 109, 121 to 151, 167 to 197, 209 to 241, 253 to 283, 297 to 327, and 339 to 369; these read GHVG…IVWD, MPTT…SVVP, THTS…AIWD, GHTG…LVWD, GHEA…RLFD, SILF…GVWD, and GHEN…RIWA.

Belongs to the WD repeat G protein beta family. G proteins are composed of 3 units, alpha, beta and gamma. Interacts with G protein gamma subunits gpc-1 and gpc-2 and with egl-10 and eat-16.

In terms of biological role, guanine nucleotide-binding proteins (G proteins) are involved as a modulator or transducer in various transmembrane signaling systems. The beta and gamma chains are required for the GTPase activity, for replacement of GDP by GTP, and for G protein-effector interaction. Plays a role in regulating dopamine-mediated locomotion behavior. This is Guanine nucleotide-binding protein subunit beta-2 from Caenorhabditis elegans.